A 462-amino-acid chain; its full sequence is Glycogen synthase 1 (462 aa).

Arg-6 serves as a coordination point for ADP-alpha-D-glucose.

It belongs to the glycosyltransferase 1 family. Bacterial/plant glycogen synthase subfamily.

The enzyme catalyses [(1-&gt;4)-alpha-D-glucosyl](n) + ADP-alpha-D-glucose = [(1-&gt;4)-alpha-D-glucosyl](n+1) + ADP + H(+). Its pathway is glycan biosynthesis; glycogen biosynthesis. Functionally, synthesizes alpha-1,4-glucan chains using ADP-glucose. The sequence is that of Glycogen synthase 1 from Bradyrhizobium diazoefficiens (strain JCM 10833 / BCRC 13528 / IAM 13628 / NBRC 14792 / USDA 110).